The primary structure comprises 327 residues: Phenylalanine--tRNA ligase alpha subunit (327 aa).

E252 lines the Mg(2+) pocket.

This sequence belongs to the class-II aminoacyl-tRNA synthetase family. Phe-tRNA synthetase alpha subunit type 1 subfamily. As to quaternary structure, tetramer of two alpha and two beta subunits. Requires Mg(2+) as cofactor.

The protein localises to the cytoplasm. The catalysed reaction is tRNA(Phe) + L-phenylalanine + ATP = L-phenylalanyl-tRNA(Phe) + AMP + diphosphate + H(+). The sequence is that of Phenylalanine--tRNA ligase alpha subunit from Shigella sonnei (strain Ss046).